Consider the following 819-residue polypeptide: Solute carrier organic anion transporter family member 74D (819 aa).

The segment at 1 to 157 is disordered; the sequence is MTKSNGDVEA…GSSAESSSSC (157 aa). Residues 1–174 lie on the Cytoplasmic side of the membrane; it reads MTKSNGDVEA…RWARRFASTH (174 aa). Composition is skewed to polar residues over residues 24–34, 43–62, and 71–81; these read GHGQLNGNGYH, SQAFTPLLSQHNNGTTNGEV, and LYESTPSNNNE. 2 stretches are compositionally biased toward low complexity: residues 91-111 and 144-157; these read LKNGLGNILSSNNNGTGNGHS and DLNGGSSAESSSSC. A helical membrane pass occupies residues 175–195; that stretch reads VFMVVFLLAYILQGMYMTYFV. The Extracellular segment spans residues 196 to 213; the sequence is SVITTIEKLFQIKSKTTG. Residues 214–234 form a helical membrane-spanning segment; that stretch reads ILLSASEMGQICTAMLLTYFA. Topologically, residues 235-242 are cytoplasmic; it reads GRGHRPRW. The chain crosses the membrane as a helical span at residues 243 to 263; sequence IACGMVLFSIAAFSCALPHFI. At 264–332 the chain is on the extracellular side; the sequence is FGEQLMHSSV…LEQASHSKIT (69 aa). Asparagine 284, asparagine 293, and asparagine 309 each carry an N-linked (GlcNAc...) asparagine glycan. The chain crosses the membrane as a helical span at residues 333 to 353; sequence VIVLCIFFGSLLSSGIGQTAV. Residues 354–373 are Cytoplasmic-facing; sequence ATLGIPYIDDNVGSKQSPMY. A helical transmembrane segment spans residues 374 to 394; it reads MAVTIGMRILGPASGFIFGSF. Residues 395 to 413 lie on the Extracellular side of the membrane; the sequence is CTRWYVNFSNPGFDATDPR. Asparagine 401 carries an N-linked (GlcNAc...) asparagine glycan. The helical transmembrane segment at 414 to 434 threads the bilayer; the sequence is WIGAWWLGPVAIGSLMLLASI. Residues 435–488 lie on the Cytoplasmic side of the membrane; it reads AMFSFPKQLRGKQKPPGQTATPAAPVEPEEKPKLKDFPKTVRRQLSNDILMFRT. Positions 444–466 are disordered; it reads RGKQKPPGQTATPAAPVEPEEKP. Residues 489 to 509 traverse the membrane as a helical segment; that stretch reads ASCVFHLLPIAGLYTFLPKYL. Residues 510-522 are Extracellular-facing; that stretch reads ETQFRLATYDANM. A helical transmembrane segment spans residues 523-543; the sequence is IAAFCGILVMGIGIVISGLFI. The Cytoplasmic segment spans residues 544 to 553; sequence LKRKPTARGV. Residues 554–574 form a helical membrane-spanning segment; sequence AAWIAFTALVYSAGMIILMFI. At 575–667 the chain is on the extracellular side; sequence GCSMNDFAGY…NGYCDNNCKN (93 aa). The Kazal-like domain occupies 593–651; sequence ALIEPTCSAALNCTCDKENFAPICADGKMYISACHAGCSSSSLRPSDNRTLYSDCACIP. Intrachain disulfides connect cysteine 599–cysteine 630, cysteine 607–cysteine 626, and cysteine 616–cysteine 649. The N-linked (GlcNAc...) asparagine glycan is linked to asparagine 604. Asparagine 640 is a glycosylation site (N-linked (GlcNAc...) asparagine). The helical transmembrane segment at 668-688 threads the bilayer; it reads FIYFILIFAICVFMHSTSEVG. The Cytoplasmic portion of the chain corresponds to 689–707; that stretch reads SMLLVMRCTHPKDKAMAMG. A helical membrane pass occupies residues 708–728; that stretch reads VIQSAIGLFGNVPCPIIYGAV. The Extracellular segment spans residues 729-756; it reads VDSACLIWKSVCGKHGACSLYDADTFRQ. The chain crosses the membrane as a helical span at residues 757–777; that stretch reads YFLGITAGIMFLAFLMDLVVW. Residues 778 to 819 lie on the Cytoplasmic side of the membrane; it reads RKAHRIDIAPEDPQEGGPASNGRTLEVSESKQPITPAPDTTV. The interval 787–819 is disordered; that stretch reads PEDPQEGGPASNGRTLEVSESKQPITPAPDTTV. A compositionally biased stretch (polar residues) spans 807 to 819; it reads SKQPITPAPDTTV.

It belongs to the organo anion transporter (TC 2.A.60) family.

It is found in the cell membrane. Its function is as follows. Transporter that mediates the cellular uptake of ecdysteroids, including ecdysone, from the hemolymph. The chain is Solute carrier organic anion transporter family member 74D from Drosophila melanogaster (Fruit fly).